Here is a 1025-residue protein sequence, read N- to C-terminus: Multidrug resistance protein MdtC (1025 aa).

Helical transmembrane passes span 3–23, 333–353, 360–380, 387–407, 431–451, 463–483, 528–548, 853–873, 875–895, 897–917, 953–973, and 984–1004; these read FFAL…AITL, EVEQ…FLFL, IIPA…MYLC, LSLM…IVVL, VGFT…PLLL, FAVT…TLTP, LVGV…ISIP, VILI…LYES, VHPL…LLAL, LFNA…IGIV, PIMM…LSGG, and ITIV…TPVV.

The protein belongs to the resistance-nodulation-cell division (RND) (TC 2.A.6) family. MdtC subfamily. Part of a tripartite efflux system composed of MdtA, MdtB and MdtC. MdtC forms a heteromultimer with MdtB.

The protein localises to the cell inner membrane. Its function is as follows. The MdtABC tripartite complex confers resistance against novobiocin and deoxycholate. In Escherichia coli (strain 55989 / EAEC), this protein is Multidrug resistance protein MdtC.